A 1123-amino-acid polypeptide reads, in one-letter code: Leucine--tRNA ligase, cytoplasmic (1123 aa).

Residues 84–94 (PYMNGRLHAGH) carry the 'HIGH' region motif. A 'KMSKS' region motif is present at residues 757-761 (KMSKS). Lys760 lines the ATP pocket.

The protein belongs to the class-I aminoacyl-tRNA synthetase family.

The protein resides in the cytoplasm. The enzyme catalyses tRNA(Leu) + L-leucine + ATP = L-leucyl-tRNA(Leu) + AMP + diphosphate. The sequence is that of Leucine--tRNA ligase, cytoplasmic (leu-6) from Neurospora crassa (strain ATCC 24698 / 74-OR23-1A / CBS 708.71 / DSM 1257 / FGSC 987).